We begin with the raw amino-acid sequence, 302 residues long: 33 kDa chaperonin (302 aa).

Cystine bridges form between Cys247/Cys249 and Cys280/Cys283.

This sequence belongs to the HSP33 family. Under oxidizing conditions two disulfide bonds are formed involving the reactive cysteines. Under reducing conditions zinc is bound to the reactive cysteines and the protein is inactive.

The protein localises to the cytoplasm. Redox regulated molecular chaperone. Protects both thermally unfolding and oxidatively damaged proteins from irreversible aggregation. Plays an important role in the bacterial defense system toward oxidative stress. The chain is 33 kDa chaperonin from Prochlorococcus marinus (strain MIT 9301).